The primary structure comprises 521 residues: Glutamyl-tRNA(Gln) amidotransferase subunit A (521 aa).

Catalysis depends on charge relay system residues K79 and S187. S211 acts as the Acyl-ester intermediate in catalysis.

Belongs to the amidase family. GatA subfamily. As to quaternary structure, heterotrimer of A, B and C subunits.

It catalyses the reaction L-glutamyl-tRNA(Gln) + L-glutamine + ATP + H2O = L-glutaminyl-tRNA(Gln) + L-glutamate + ADP + phosphate + H(+). Its function is as follows. Allows the formation of correctly charged Gln-tRNA(Gln) through the transamidation of misacylated Glu-tRNA(Gln) in organisms which lack glutaminyl-tRNA synthetase. The reaction takes place in the presence of glutamine and ATP through an activated gamma-phospho-Glu-tRNA(Gln). The chain is Glutamyl-tRNA(Gln) amidotransferase subunit A from Mesorhizobium japonicum (strain LMG 29417 / CECT 9101 / MAFF 303099) (Mesorhizobium loti (strain MAFF 303099)).